The chain runs to 409 residues: Elongation factor Tu, chloroplastic (409 aa).

In terms of domain architecture, tr-type G spans 10–214 (KPHVNIGTIG…AVDEYIPTPE (205 aa)). The tract at residues 19–26 (GHVDHGKT) is G1. A GTP-binding site is contributed by 19-26 (GHVDHGKT). Threonine 26 is a binding site for Mg(2+). Positions 60–64 (GITIN) are G2. The tract at residues 81 to 84 (DCPG) is G3. Residues 81-85 (DCPGH) and 136-139 (NKED) each bind GTP. The interval 136-139 (NKED) is G4. Residues 174–176 (SAL) form a G5 region.

The protein belongs to the TRAFAC class translation factor GTPase superfamily. Classic translation factor GTPase family. EF-Tu/EF-1A subfamily.

It localises to the plastid. Its subcellular location is the chloroplast. It carries out the reaction GTP + H2O = GDP + phosphate + H(+). GTP hydrolase that promotes the GTP-dependent binding of aminoacyl-tRNA to the A-site of ribosomes during protein biosynthesis. This chain is Elongation factor Tu, chloroplastic (tufA), found in Trieres chinensis (Marine centric diatom).